The primary structure comprises 172 residues: Bifunctional protein PyrR (172 aa).

Residues 90–102 (LVLVDDVLMSGRT) carry the PRPP-binding motif.

Belongs to the purine/pyrimidine phosphoribosyltransferase family. PyrR subfamily.

It carries out the reaction UMP + diphosphate = 5-phospho-alpha-D-ribose 1-diphosphate + uracil. In terms of biological role, regulates the transcription of the pyrimidine nucleotide (pyr) operon in response to exogenous pyrimidines. Also displays a weak uracil phosphoribosyltransferase activity which is not physiologically significant. This chain is Bifunctional protein PyrR, found in Pseudomonas entomophila (strain L48).